A 120-amino-acid chain; its full sequence is MDQLIQLVEATQPGVECPALNPGDTVRIQLRVIEGEKERLQAFEGVVISDRGAGASKTITVRKISHGVGVERIIPVNSPNIESVTVLKHGKARRSKLFYLRKRTGKAALKVKERKVSEQA.

Belongs to the bacterial ribosomal protein bL19 family.

Functionally, this protein is located at the 30S-50S ribosomal subunit interface and may play a role in the structure and function of the aminoacyl-tRNA binding site. This Chlorobium luteolum (strain DSM 273 / BCRC 81028 / 2530) (Pelodictyon luteolum) protein is Large ribosomal subunit protein bL19.